Reading from the N-terminus, the 1155-residue chain is Cilia- and flagella-associated protein 251 (1155 aa).

2 stretches are compositionally biased toward basic and acidic residues: residues 1 to 19 (MSDAEEAPREATRENGETE) and 31 to 59 (KEVEDPQQESKDDTLAWRESQEEERKTGE). Disordered regions lie at residues 1 to 144 (MSDA…KLSL) and 167 to 225 (LDQI…DIQS). Residues 60–69 (EEGEEEEEKE) are compositionally biased toward acidic residues. Over residues 70–95 (EEGKKDKKIVMEETEEKAGESQEKEA) the composition is skewed to basic and acidic residues. Over residues 99 to 111 (QEETTVEPQEVTE) the composition is skewed to low complexity. Composition is skewed to polar residues over residues 118-128 (TQITDSQSVTS) and 172-182 (PEEQQISSPER). Over residues 201–220 (GQERRDLEPENREEGQERTV) the composition is skewed to basic and acidic residues. WD repeat units follow at residues 341–383 (PVHT…IWKW), 391–431 (ACTL…AWYE), 442–481 (LLTEKTFNKLVGKFSQSVFHLNLTQILSATMEGKLVVWDI), 499–534 (PCKLVHLQKEGITVLTTTDSYIVTGDIKGNIKFYDH), 537–597 (SIVN…VYHL), 601–641 (GTKL…VWNY), 647–684 (LFSRVFEKGLGVQSLTYNPEGALLGAGFTEGTVYILDA), 694–730 (PFKYSRTSVTHISFSHDSQYMATADRSFTVAVYMLVV), 737–780 (WEYL…GYDL), 791–831 (LDIH…LFNA), 837–883 (RKTL…ILPV), 889–927 (KTSAIVCHPNGVAGMAVSYDGHYAFTAGGHDRSVVQWKI), 965–1005 (YFYY…FYPS), and 1025–1065 (GKLI…GYTN).

The protein localises to the cytoplasm. Its subcellular location is the cytoskeleton. The protein resides in the cilium axoneme. It is found in the cell projection. It localises to the cilium. The protein localises to the flagellum. Its function is as follows. Involved in spermatozoa motility. May also regulate cilium motility through its role in the assembly of the axonemal radial spokes. The sequence is that of Cilia- and flagella-associated protein 251 from Pongo abelii (Sumatran orangutan).